The sequence spans 379 residues: Carbamoyl phosphate synthase small chain (379 aa).

A CPSase region spans residues 1-189 (MSKLALLVLE…GLPEAKDDSE (189 aa)). L-glutamine is bound by residues Ser47, Gly241, and Gly243. A Glutamine amidotransferase type-1 domain is found at 193 to 379 (HVVAYDFGAK…FIELIKKHSA (187 aa)). The active-site Nucleophile is the Cys269. 5 residues coordinate L-glutamine: Leu270, Gln273, Asn311, Gly313, and Phe314. Active-site residues include His353 and Glu355.

Belongs to the CarA family. As to quaternary structure, composed of two chains; the small (or glutamine) chain promotes the hydrolysis of glutamine to ammonia, which is used by the large (or ammonia) chain to synthesize carbamoyl phosphate. Tetramer of heterodimers (alpha,beta)4.

The catalysed reaction is hydrogencarbonate + L-glutamine + 2 ATP + H2O = carbamoyl phosphate + L-glutamate + 2 ADP + phosphate + 2 H(+). The enzyme catalyses L-glutamine + H2O = L-glutamate + NH4(+). Its pathway is amino-acid biosynthesis; L-arginine biosynthesis; carbamoyl phosphate from bicarbonate: step 1/1. It functions in the pathway pyrimidine metabolism; UMP biosynthesis via de novo pathway; (S)-dihydroorotate from bicarbonate: step 1/3. Small subunit of the glutamine-dependent carbamoyl phosphate synthetase (CPSase). CPSase catalyzes the formation of carbamoyl phosphate from the ammonia moiety of glutamine, carbonate, and phosphate donated by ATP, constituting the first step of 2 biosynthetic pathways, one leading to arginine and/or urea and the other to pyrimidine nucleotides. The small subunit (glutamine amidotransferase) binds and cleaves glutamine to supply the large subunit with the substrate ammonia. The sequence is that of Carbamoyl phosphate synthase small chain from Vibrio parahaemolyticus serotype O3:K6 (strain RIMD 2210633).